The primary structure comprises 1663 residues: MGPASGSQLLVLLLLLASSPLALGIPMYSIITPNVLRLESEETIVLEAHDAQGDIPVTVTVQDFLKRQVLTSEKTVLTGASGHLRSVSIKIPASKEFNSDKEGHKYVTVVANFGETVVEKAVMVSFQSGYLFIQTDKTIYTPGSTVLYRIFTVDNNLLPVGKTVVILIETPDGIPVKRDILSSNNQHGILPLSWNIPELVNMGQWKIRAFYEHAPKQIFSAEFEVKEYVLPSFEVRVEPTETFYYIDDPNGLEVSIIAKFLYGKNVDGTAFVIFGVQDGDKKISLAHSLTRVVIEDGVGDAVLTRKVLMEGVRPSNADALVGKSLYVSVTVILHSGSDMVEAERSGIPIVTSPYQIHFTKTPKFFKPAMPFDLMVFVTNPDGSPASKVLVVTQGSNAKALTQDDGVAKLSINTPNSRQPLTITVRTKKDTLPESRQATKTMEAHPYSTMHNSNNYLHLSVSRMELKPGDNLNVNFHLRTDPGHEAKIRYYTYLVMNKGKLLKAGRQVREPGQDLVVLSLPITPEFIPSFRLVAYYTLIGASGQREVVADSVWVDVKDSCIGTLVVKGDPRDNHLAPGQQTTLRIEGNQGARVGLVAVDKGVFVLNKKNKLTQSKIWDVVEKADIGCTPGSGKNYAGVFMDAGLAFKTSQGLQTEQRADLECTKPAARRRRSVQLMERRMDKAGQYTDKGLRKCCEDGMRDIPMRYSCQRRARLITQGENCIKAFIDCCNHITKLREQHRRDHVLGLARSELEEDIIPEEDIISRSHFPQSWLWTIEELKEPEKNGISTKVMNIFLKDSITTWEILAVSLSDKKGICVADPYEIRVMQDFFIDLRLPYSVVRNEQVEIRAVLFNYREQEELKVRVELLHNPAFCSMATAKNRYFQTIKIPPKSSVAVPYVIVPLKIGQQEVEVKAAVFNHFISDGVKKTLKVVPEGMRINKTVAIHTLDPEKLGQGGVQKVDVPAADLSDQVPDTDSETRIILQGSPVVQMAEDAVDGERLKHLIVTPAGCGEQNMIGMTPTVIAVHYLDQTEQWEKFGIEKRQEALELIKKGYTQQLAFKQPSSAYAAFNNRPPSTWLTAYVVKVFSLAANLIAIDSHVLCGAVKWLILEKQKPDGVFQEDGPVIHQEMIGGFRNAKEADVSLTAFVLIALQEARDICEGQVNSLPGSINKAGEYIEASYMNLQRPYTVAIAGYALALMNKLEEPYLGKFLNTAKDRNRWEEPDQQLYNVEATSYALLALLLLKDFDSVPPVVRWLNEQRYYGGGYGSTQATFMVFQALAQYQTDVPDHKDLNMDVSFHLPSRSSATTFRLLWENGNLLRSEETKQNEAFSLTAKGKGRGTLSVVAVYHAKLKSKVTCKKFDLRVSIRPAPETAKKPEEAKNTMFLEICTKYLGDVDATMSILDISMMTGFAPDTKDLELLASGVDRYISKYEMNKAFSNKNTLIIYLEKISHTEEDCLTFKVHQYFNVGLIQPGSVKVYSYYNLEESCTRFYHPEKDDGMLSKLCHSEMCRCAEENCFMQQSQEKINLNVRLDKACEPGVDYVYKTELTNIELLDDFDEYTMTIQQVIKSGSDEVQAGQQRKFISHIKCRNALKLQKGKKYLMWGLSSDLWGEKPNTSYIIGKDTWVEHWPEAEECQDQKYQKQCEELGAFTESMVVYGCPN.

The first 24 residues, 1–24 (MGPASGSQLLVLLLLLASSPLALG), serve as a signal peptide directing secretion. Serine 40 is modified (phosphoserine). Intrachain disulfides connect cysteine 559–cysteine 816, cysteine 626–cysteine 661, cysteine 693–cysteine 720, cysteine 694–cysteine 727, cysteine 707–cysteine 728, cysteine 873–cysteine 1513, cysteine 1101–cysteine 1158, cysteine 1358–cysteine 1489, cysteine 1389–cysteine 1458, cysteine 1506–cysteine 1511, cysteine 1518–cysteine 1590, cysteine 1537–cysteine 1661, and cysteine 1637–cysteine 1646. Residue serine 671 is modified to Phosphoserine. In terms of domain architecture, Anaphylatoxin-like spans 693–728 (CCEDGMRDIPMRYSCQRRARLITQGENCIKAFIDCC). N-linked (GlcNAc...) asparagine glycosylation occurs at asparagine 939. At serine 968 the chain carries Phosphoserine. A cross-link (isoglutamyl cysteine thioester (Cys-Gln)) is located at residues 1010-1013 (CGEQ). Residue serine 1321 is modified to Phosphoserine. In terms of domain architecture, NTR spans 1518-1661 (CFMQQSQEKI…FTESMVVYGC (144 aa)). At serine 1573 the chain carries Phosphoserine. N-linked (GlcNAc...) asparagine glycosylation occurs at asparagine 1617. The segment at 1634-1659 (AEECQDQKYQKQCEELGAFTESMVVY) is interaction with CFP/properdin.

In absence of complement activation, the C3 precursor is first processed by the removal of 4 Arg residues, forming two chains, beta and alpha, linked by a disulfide bond. In terms of assembly, complement C3b is composed of complement C3b and complement C3 beta chains that are associated via disulfide bonds. Non-enzymatic component of the C5 convertase, also named C4bC2bC3b, composed of the serine protease complement C2b (C2), complement C3b, as well as complement C4b (C4). Non-enzymatic component of the C5 convertase of the alternative complement pathways composed of the serine protease complement CFB and complement C3b. Interacts with CFP; interaction takes place together with CFB in the alternative complement system and allows the complex to become active. Interacts with CR1 (via Sushi 8 and Sushi 9 domains). Interacts with CFH. As to quaternary structure, interacts with CFH. Interacts with CR2. During pregnancy, C3dg exists as a complex (probably a 2:2:2 heterohexamer) with AGT and the proform of PRG2. Interacts with CR2 (via the N-terminal Sushi domains 1 and 2). Post-translationally, C3 precursor is first processed by the removal of 4 Arg residues, forming two chains, beta and alpha, linked by a disulfide bond. During activation of the complement systems, the alpha chain is cleaved into C3a and C3b by the C3 convertase: C3b stays linked to the beta chain, while C3a is released in the plasma. The alpha chain is cleaved by the serine protease complement C2b component of the C3 convertase to generate C3a and C3b following activation by the classical, lectin and GZMK complement systems. The alpha chain is cleaved by CFB component of the C3 convertase to generate C3a and C3b following activation by the alternative complement system. C3a is further processed by carboxypeptidases to release the C-terminal arginine residue generating the acylation stimulating protein (ASP). Levels of ASP are increased in adipocytes in the postprandial period and by insulin and dietary chylomicrons. In terms of processing, complement C3b is rapidly split in two positions by factor I (CFI) and a cofactor (CFH) to form iC3b (inactivated C3b) and C3f which is released. CFI and CFH catalyze proteolytic degradation of already-deposited complement C3b. Then iC3b is slowly cleaved (possibly by CFI) to form C3c (beta chain + alpha' chain fragment 1 + alpha' chain fragment 2), C3dg and C3f. Other proteases produce other fragments such as C3d or C3g. Post-translationally, upon activation, the internal thioester bond reacts with carbohydrate antigens on the target surface to form amide or ester bonds, leading to covalent association with the surface of pathogens. Complement C3b interacts with complement C4b via a thioester linkage. In terms of processing, phosphorylated by FAM20C in the extracellular medium.

It localises to the secreted. Its subcellular location is the cell surface. With respect to regulation, complement activation is inhibited by VSIG4. In terms of biological role, precursor of non-enzymatic components of the classical, alternative, lectin and GZMK complement pathways, which consist in a cascade of proteins that leads to phagocytosis and breakdown of pathogens and signaling that strengthens the adaptive immune system. Its function is as follows. Non-enzymatic component of C5 convertase. Generated following cleavage by C3 convertase, it covalently attaches to the surface of pathogens, where it acts as an opsonin that marks the surface of antigens for removal. Complement C3b binds covalently via its reactive thioester, to cell surface carbohydrates or immune aggregates. Together with complement C4b, it then recruits the serine protease complement C2b to form the C5 convertase, which cleaves and activate C5, the next component of the complement pathways. In the alternative complement pathway, recruits the serine protease CFB to form the C5 convertase that cleaves and activates C5. Mediator of local inflammatory process released following cleavage by C3 convertase. Acts by binding to its receptor, C3AR1, activating G protein-coupled receptor signaling, promoting the phosphorylation, ARRB2-mediated internalization and endocytosis of C3AR1. C3a anaphylatoxin stimulates the activation of immune cells such as mast cells and basophilic leukocytes to release inflammation agents, such as cytokines, chemokines and histamine, which promote inflammation development. Also acts as potent chemoattractant for the migration of macrophages and neutrophils to the inflamed tissues, resulting in neutralization of the inflammatory triggers by multiple ways, such as phagocytosis and generation of reactive oxidants. Functionally, adipogenic hormone that stimulates triglyceride synthesis and glucose transport in adipocytes, regulating fat storage and playing a role in postprandial triglyceride clearance. Appears to stimulate triglyceride synthesis via activation of the PLC, MAPK and AKT signaling pathways. Acts by binding to its receptor, C5AR2, activating G protein-coupled receptor signaling, promoting the phosphorylation, ARRB2-mediated internalization and endocytosis of C5AR2. In terms of biological role, acts as a chemoattractant for neutrophils in chronic inflammation. The sequence is that of Complement C3 from Mus musculus (Mouse).